The sequence spans 146 residues: MSSRTVGSLRHRVRAAALQALFELDQTTHDLDSVVARISDDEMFSAEGRDFFARIVNGAWVNRQEIDDLIAKIAPSWPVHQMPGVDIAVLRIALFEILYDAAADKAPVKAVINEAVELAKHFGSDNSGRFVNGVLSTVVNKPESEE.

The protein belongs to the NusB family.

Involved in transcription antitermination. Required for transcription of ribosomal RNA (rRNA) genes. Binds specifically to the boxA antiterminator sequence of the ribosomal RNA (rrn) operons. In Herpetosiphon aurantiacus (strain ATCC 23779 / DSM 785 / 114-95), this protein is Transcription antitermination protein NusB.